Here is a 246-residue protein sequence, read N- to C-terminus: Acetoacetate decarboxylase (246 aa).

Lysine 116 serves as the catalytic Schiff-base intermediate with acetoacetate.

It belongs to the ADC family.

It catalyses the reaction acetoacetate + H(+) = acetone + CO2. Catalyzes the conversion of acetoacetate to acetone and carbon dioxide. In Burkholderia cenocepacia (strain ATCC BAA-245 / DSM 16553 / LMG 16656 / NCTC 13227 / J2315 / CF5610) (Burkholderia cepacia (strain J2315)), this protein is Acetoacetate decarboxylase.